A 230-amino-acid chain; its full sequence is Ribonuclease HII (230 aa).

The RNase H type-2 domain maps to 28–217; that stretch reads FRIAGIDEAG…VKEHLPSQPD (190 aa). A divalent metal cation-binding residues include aspartate 34, glutamate 35, and aspartate 126. Positions 211-230 are disordered; sequence HLPSQPDCDTAGPSTGLFSF.

It belongs to the RNase HII family. Mn(2+) is required as a cofactor. Requires Mg(2+) as cofactor.

The protein resides in the cytoplasm. It catalyses the reaction Endonucleolytic cleavage to 5'-phosphomonoester.. Its function is as follows. Endonuclease that specifically degrades the RNA of RNA-DNA hybrids. This chain is Ribonuclease HII, found in Geobacter sp. (strain M21).